A 108-amino-acid polypeptide reads, in one-letter code: Ig kappa chain V-V region HP 124E1 (108 aa).

The tract at residues 1 to 23 (DIQMTQTTSSLSASLGDRVTISC) is framework-1. An intrachain disulfide couples cysteine 23 to cysteine 88. Positions 24–34 (RASQDINNYLN) are complementarity-determining-1. Residues 35–49 (WYQQKPDGTVKLLIY) are framework-2. The segment at 50–56 (YTSRLHS) is complementarity-determining-2. The framework-3 stretch occupies residues 57–88 (GVPSRFSGSGSGTDYSLTISNLEQEDIATYFC). The segment at 89–97 (QQGKTLPRT) is complementarity-determining-3. The interval 98-108 (FGGGTKLEIKR) is framework-4.

This is Ig kappa chain V-V region HP 124E1 from Mus musculus (Mouse).